Consider the following 777-residue polypeptide: Probable aconitate hydratase, mitochondrial (777 aa).

Residues 1 to 26 constitute a mitochondrion transit peptide; the sequence is MNSLLRLSHLAGPAHYRALHSSSSIW. Residues Gln96 and 189-191 each bind substrate; that span reads DSH. The [4Fe-4S] cluster site is built by Cys382, Cys445, and Cys448. Residues Arg471 and Arg476 each coordinate substrate. The segment at 534–555 is disordered; the sequence is YDPGEDTFQAPSGSGQVDVSPS. Polar residues predominate over residues 542 to 555; the sequence is QAPSGSGQVDVSPS. Substrate-binding positions include Arg601 and 664-665; that span reads SR.

Belongs to the aconitase/IPM isomerase family. In terms of assembly, monomer. Requires [4Fe-4S] cluster as cofactor.

The protein resides in the mitochondrion. It carries out the reaction citrate = D-threo-isocitrate. It functions in the pathway carbohydrate metabolism; tricarboxylic acid cycle; isocitrate from oxaloacetate: step 2/2. In terms of biological role, catalyzes the isomerization of citrate to isocitrate via cis-aconitate. The sequence is that of Probable aconitate hydratase, mitochondrial from Caenorhabditis elegans.